The chain runs to 355 residues: Peptide chain release factor 1 (355 aa).

Q231 carries the post-translational modification N5-methylglutamine. Basic and acidic residues predominate over residues 280–291 (SERLAKESEARK). Residues 280 to 303 (SERLAKESEARKSQVGSGDRSERI) form a disordered region.

This sequence belongs to the prokaryotic/mitochondrial release factor family. Post-translationally, methylated by PrmC. Methylation increases the termination efficiency of RF1.

Its subcellular location is the cytoplasm. Its function is as follows. Peptide chain release factor 1 directs the termination of translation in response to the peptide chain termination codons UAG and UAA. The protein is Peptide chain release factor 1 of Campylobacter jejuni (strain RM1221).